The primary structure comprises 946 residues: Bifunctional glutamine synthetase adenylyltransferase/adenylyl-removing enzyme (946 aa).

Residues 1-440 (MKPLSSPLQQ…VFNELIGDDE (440 aa)) form an adenylyl removase region. Positions 449–946 (SEQWRELWQD…ASWQKWLVEE (498 aa)) are adenylyl transferase.

Belongs to the GlnE family. Requires Mg(2+) as cofactor.

The enzyme catalyses [glutamine synthetase]-O(4)-(5'-adenylyl)-L-tyrosine + phosphate = [glutamine synthetase]-L-tyrosine + ADP. The catalysed reaction is [glutamine synthetase]-L-tyrosine + ATP = [glutamine synthetase]-O(4)-(5'-adenylyl)-L-tyrosine + diphosphate. Its function is as follows. Involved in the regulation of glutamine synthetase GlnA, a key enzyme in the process to assimilate ammonia. When cellular nitrogen levels are high, the C-terminal adenylyl transferase (AT) inactivates GlnA by covalent transfer of an adenylyl group from ATP to specific tyrosine residue of GlnA, thus reducing its activity. Conversely, when nitrogen levels are low, the N-terminal adenylyl removase (AR) activates GlnA by removing the adenylyl group by phosphorolysis, increasing its activity. The regulatory region of GlnE binds the signal transduction protein PII (GlnB) which indicates the nitrogen status of the cell. The protein is Bifunctional glutamine synthetase adenylyltransferase/adenylyl-removing enzyme of Shigella boydii serotype 4 (strain Sb227).